Here is a 206-residue protein sequence, read N- to C-terminus: Small ribosomal subunit protein uS4 (206 aa).

Residues 96 to 156 form the S4 RNA-binding domain; sequence GRLDNVVYRM…EKSKKQARIK (61 aa).

Belongs to the universal ribosomal protein uS4 family. In terms of assembly, part of the 30S ribosomal subunit. Contacts protein S5. The interaction surface between S4 and S5 is involved in control of translational fidelity.

Functionally, one of the primary rRNA binding proteins, it binds directly to 16S rRNA where it nucleates assembly of the body of the 30S subunit. With S5 and S12 plays an important role in translational accuracy. The polypeptide is Small ribosomal subunit protein uS4 (Glaesserella parasuis serovar 5 (strain SH0165) (Haemophilus parasuis)).